A 457-amino-acid polypeptide reads, in one-letter code: Multidrug resistance protein MdtK (457 aa).

Transmembrane regions (helical) follow at residues 11-31 (LLAL…MGFV), 53-73 (IWLP…PVIA), 93-113 (WLAG…GYII), 127-147 (AVGY…FQVA), 160-180 (GMVM…IFIY), 189-209 (GGVG…LAMV), 243-263 (LPIA…ALLV), 276-296 (IALN…AAVT), 314-334 (AART…IFTV), 350-370 (VVTL…SDSI), 387-407 (IFYI…YILA), and 418-438 (PAGF…MMML).

This sequence belongs to the multi antimicrobial extrusion (MATE) (TC 2.A.66.1) family. MdtK subfamily.

The protein localises to the cell inner membrane. In terms of biological role, multidrug efflux pump that functions probably as a Na(+)/drug antiporter. This Escherichia coli O45:K1 (strain S88 / ExPEC) protein is Multidrug resistance protein MdtK.